The primary structure comprises 60 residues: Large ribosomal subunit protein bL32 (60 aa).

Positions M1–K21 are disordered. Positions H7–Y20 are enriched in basic residues.

It belongs to the bacterial ribosomal protein bL32 family.

This chain is Large ribosomal subunit protein bL32, found in Streptococcus uberis (strain ATCC BAA-854 / 0140J).